The sequence spans 197 residues: Imidazoleglycerol-phosphate dehydratase (197 aa).

It belongs to the imidazoleglycerol-phosphate dehydratase family.

The protein resides in the cytoplasm. It carries out the reaction D-erythro-1-(imidazol-4-yl)glycerol 3-phosphate = 3-(imidazol-4-yl)-2-oxopropyl phosphate + H2O. It functions in the pathway amino-acid biosynthesis; L-histidine biosynthesis; L-histidine from 5-phospho-alpha-D-ribose 1-diphosphate: step 6/9. In Pseudomonas fluorescens (strain Pf0-1), this protein is Imidazoleglycerol-phosphate dehydratase.